The primary structure comprises 343 residues: Galactoside alpha-(1,2)-fucosyltransferase 2 (343 aa).

Topologically, residues Met-1–His-14 are cytoplasmic. Residues Phe-15 to Val-28 form a helical; Signal-anchor for type II membrane protein membrane-spanning segment. The Lumenal portion of the chain corresponds to Gln-29–His-343. N-linked (GlcNAc...) asparagine glycosylation is found at Asn-188, Asn-282, and Asn-308.

Belongs to the glycosyltransferase 11 family.

Its subcellular location is the golgi apparatus. The protein resides in the golgi stack membrane. The catalysed reaction is a beta-D-galactosyl-(1-&gt;3)-N-acetyl-beta-D-glucosaminyl derivative + GDP-beta-L-fucose = an alpha-L-Fuc-(1-&gt;2)-beta-D-Gal-(1-&gt;3)-beta-D-GlcNAc derivative + GDP + H(+). It catalyses the reaction a beta-D-galactosyl-(1-&gt;4)-N-acetyl-beta-D-glucosaminyl derivative + GDP-beta-L-fucose = an alpha-L-Fuc-(1-&gt;2)-beta-D-Gal-(1-&gt;4)-beta-D-GlcNAc derivative + GDP + H(+). The enzyme catalyses a neolactoside nLc4Cer + GDP-beta-L-fucose = a neolactoside IV(2)-alpha-Fuc-nLc4Cer + GDP + H(+). It carries out the reaction a neolactoside nLc4Cer(d18:1(4E)) + GDP-beta-L-fucose = a neolactoside IV(2)-alpha-Fuc-nLc4Cer(d18:1(4E)) + GDP + H(+). The catalysed reaction is a ganglioside GM1 + GDP-beta-L-fucose = a ganglioside Fuc-GM1 + GDP + H(+). It catalyses the reaction a ganglioside GA1 + GDP-beta-L-fucose = a ganglioside Fuc-GA1 + GDP + H(+). The enzyme catalyses Lc4Cer + GDP-beta-L-fucose = alpha-L-fucosyl-(1-&gt;2)-beta-D-galactosyl-(1-&gt;3)-N-acetyl-beta-D-glucosaminyl-(1-&gt;3)-beta-D-galactosyl-(1-&gt;4)-beta-D-glucosyl-(1&lt;-&gt;1')-ceramide + GDP + H(+). It carries out the reaction a beta-D-Gal-(1-&gt;3)-beta-D-GlcNAc-(1-&gt;3)-beta-D-Gal-(1-&gt;4)-beta-D-Glc-(1&lt;-&gt;1')-Cer(d18:1(4E)) + GDP-beta-L-fucose = alpha-L-fucosyl-(1-&gt;2)- beta-D-galactosyl-(1-&gt;3)-N-acetyl-beta-D-glucosaminyl-(1-&gt;3)-beta-D-galactosyl-(1-&gt;4)-beta-D-glucosyl-(1&lt;-&gt;1')-N-acylsphing-4-enine + GDP + H(+). The catalysed reaction is a ganglioside GD1b + GDP-beta-L-fucose = a ganglioside Fuc-GD1b + GDP + H(+). It catalyses the reaction a ganglioside GM1 (d18:1(4E)) + GDP-beta-L-fucose = a ganglioside Fuc-GM1 (d18:1(4E)) + GDP + H(+). The enzyme catalyses a globoside GalGb4Cer (d18:1(4E)) + GDP-beta-L-fucose = a globoside Globo-H (d18:1(4E)) + GDP + H(+). It carries out the reaction a lactoside III(4)-a-Fuc-Lc4Cer + GDP-beta-L-fucose = a lactoside IV(2),III(4)-a-[Fuc]2-Lc4Cer + GDP + H(+). The catalysed reaction is beta-D-galactosyl-(1-&gt;3)-N-acetyl-D-galactosamine + GDP-beta-L-fucose = alpha-L-fucosyl-(1-&gt;2)-beta-D-galactosyl-(1-&gt;3)-N-acetyl-D-galactosamine + GDP + H(+). It participates in protein modification; protein glycosylation. Its function is as follows. Catalyzes the transfer of L-fucose, from a guanosine diphosphate-beta-L-fucose, to the terminal galactose on both O- and N-linked glycans chains of cell surface glycoproteins and glycolipids and the resulting epitope regulates several processes such as cell-cell interaction including host-microbe interaction, cell surface expression and cell proliferation. Preferentially fucosylates gangliosides GA1 and GM1 in the antrum, cecum and colon and in the female reproductive organs. Fucosylated host glycoproteins or glycolipids mediate interaction with intestinal microbiota influencing its composition. Creates a soluble precursor oligosaccharide FuC-alpha ((1,2)Galbeta-) called the H antigen which is an essential substrate for the final step in the soluble ABO blood group antigen synthesis pathway. This Hylobates lar (Lar gibbon) protein is Galactoside alpha-(1,2)-fucosyltransferase 2.